Here is a 183-residue protein sequence, read N- to C-terminus: Putative manganese efflux pump MntP (183 aa).

6 consecutive transmembrane segments (helical) span residues 6–26 (LFLI…CIGL), 40–60 (IYFG…GFLF), 64–84 (IATM…IIMI), 101–121 (MNII…FTAL), 135–155 (LFIG…SKYL), and 158–178 (IDVI…FFGL).

This sequence belongs to the MntP (TC 9.B.29) family.

It is found in the cell membrane. Probably functions as a manganese efflux pump. This chain is Putative manganese efflux pump MntP, found in Clostridium tetani (strain Massachusetts / E88).